Consider the following 249-residue polypeptide: Eukaryotic translation initiation factor 3 subunit K (249 aa).

A PCI domain is found at 46–222 (FDCYANLALL…VKVPTNKENE (177 aa)).

It belongs to the eIF-3 subunit K family. As to quaternary structure, component of the eukaryotic translation initiation factor 3 (eIF-3) complex.

Its subcellular location is the cytoplasm. In terms of biological role, component of the eukaryotic translation initiation factor 3 (eIF-3) complex, which is involved in protein synthesis of a specialized repertoire of mRNAs and, together with other initiation factors, stimulates binding of mRNA and methionyl-tRNAi to the 40S ribosome. The eIF-3 complex specifically targets and initiates translation of a subset of mRNAs involved in cell proliferation. In Aspergillus fumigatus (strain CBS 144.89 / FGSC A1163 / CEA10) (Neosartorya fumigata), this protein is Eukaryotic translation initiation factor 3 subunit K.